The following is a 770-amino-acid chain: PH and SEC7 domain-containing protein 2 (770 aa).

Positions 1–24 (MDEEKLPCELHKEGSATQEDHGLE) are enriched in basic and acidic residues. Disordered regions lie at residues 1 to 65 (MDEE…RGPD) and 181 to 304 (IQQR…ANGC). Polar residues predominate over residues 32–45 (QNGTAASEGLSSHI). S188 carries the phosphoserine modification. Composition is skewed to low complexity over residues 216 to 234 (LGSPLRRSISSSRSENVLS) and 285 to 296 (ELSSSEGLEPGS). The 204-residue stretch at 256-459 (DDEDDEDTDK…KTLYNSIKNE (204 aa)) folds into the SEC7 domain. Residues 509–622 (TTYKHGVLTR…WILRINLVAA (114 aa)) form the PH domain. The helical transmembrane segment at 619–636 (LVAAIFSAPAFPAAVSSM) threads the bilayer. A coiled-coil region spans residues 650–677 (RLCQEEQLRSHENKLRQVTAELAEHRCH). Residues 738–770 (PALRKTHSSPALSLGHGPVTGSKATKDTSASDT) are disordered.

This sequence belongs to the PSD family.

Its subcellular location is the cell membrane. It localises to the cell projection. It is found in the ruffle membrane. The protein resides in the cleavage furrow. This chain is PH and SEC7 domain-containing protein 2 (Psd2), found in Mus musculus (Mouse).